A 208-amino-acid polypeptide reads, in one-letter code: Myosin light chain 6B (208 aa).

The tract at residues 1-51 (MPPKKDVPVKKPAGPSISKPAAKPAAAGAPPAKTKAEPAVPQAPQKTQEPP) is disordered. The segment covering 10 to 40 (KKPAGPSISKPAAKPAAAGAPPAKTKAEPAV) has biased composition (low complexity). EF-hand domains are found at residues 64-99 (DQLE…LGQN), 141-176 (GTYE…LGEK), and 176-208 (KMTE…ILSV).

In terms of assembly, myosin is a hexamer of 2 heavy chains and 4 light chains.

Its function is as follows. Regulatory light chain of myosin. Does not bind calcium. The sequence is that of Myosin light chain 6B (MYL6B) from Homo sapiens (Human).